The primary structure comprises 663 residues: Bicarbonate transport ATP-binding protein CmpC (663 aa).

The 235-residue stretch at 5-239 (VAVENIEKSF…RPRKRMDVVH (235 aa)) folds into the ABC transporter domain. 42-49 (GHSGCGKS) is an ATP binding site. Positions 281–663 (LEIGYVPLMA…LDQPRPIAAA (383 aa)) are cmpA-like.

Belongs to the ABC transporter superfamily. Nitrate/nitrite/cyanate uptake transporter (NitT) (TC 3.A.1.16) family. As to quaternary structure, the complex is composed of two ATP-binding proteins (CmpC and CmpD), a transmembrane protein (CmpB) and a solute-binding protein (CmpA).

The protein localises to the cell inner membrane. Part of the ABC transporter complex CmpABCD involved in bicarbonate transport. Responsible for energy coupling to the transport system. The protein is Bicarbonate transport ATP-binding protein CmpC (cmpC) of Synechococcus elongatus (strain ATCC 33912 / PCC 7942 / FACHB-805) (Anacystis nidulans R2).